The sequence spans 101 residues: Gastrin (101 aa).

The first 21 residues, 1–21, serve as a signal peptide directing secretion; that stretch reads MPRLCVYMLVLVLALATFSEA. Residues 23–101 form a disordered region; that stretch reads WKPRSQLQDA…FGRRSAEEDQ (79 aa). The span at 25 to 37 shows a compositional bias: polar residues; that stretch reads PRSQLQDASSGPG. Tyr-87 is subject to Sulfotyrosine. Phenylalanine amide is present on Phe-92. Residues 92–101 are compositionally biased toward basic and acidic residues; that stretch reads FGRRSAEEDQ. Ser-96 carries the post-translational modification Phosphoserine. A propeptide spanning residues 96 to 101 is cleaved from the precursor; it reads SAEEDQ.

This sequence belongs to the gastrin/cholecystokinin family. Post-translationally, sulfation enhances proteolytic processing, and blocks peptide degradation. Levels of sulfation differ between proteolytically-cleaved gastrins and between tissues. As to expression, abundantly expressed in the stomach and duodenum. Low levels in brain, ovary and pancreas.

The protein resides in the secreted. Its function is as follows. Gastrin stimulates the stomach mucosa to produce and secrete hydrochloric acid and the pancreas to secrete its digestive enzymes. It also stimulates smooth muscle contraction and increases blood circulation and water secretion in the stomach and intestine. This Mus musculus (Mouse) protein is Gastrin (Gast).